The following is a 607-amino-acid chain: Elongation factor 4 (607 aa).

In terms of domain architecture, tr-type G spans 11-193 (KKIRNFSIIA…QIVELVPPPT (183 aa)). GTP-binding positions include 23–28 (DHGKST) and 140–143 (NKID).

Belongs to the TRAFAC class translation factor GTPase superfamily. Classic translation factor GTPase family. LepA subfamily.

Its subcellular location is the cell membrane. The enzyme catalyses GTP + H2O = GDP + phosphate + H(+). Required for accurate and efficient protein synthesis under certain stress conditions. May act as a fidelity factor of the translation reaction, by catalyzing a one-codon backward translocation of tRNAs on improperly translocated ribosomes. Back-translocation proceeds from a post-translocation (POST) complex to a pre-translocation (PRE) complex, thus giving elongation factor G a second chance to translocate the tRNAs correctly. Binds to ribosomes in a GTP-dependent manner. This chain is Elongation factor 4, found in Exiguobacterium sp. (strain ATCC BAA-1283 / AT1b).